A 55-amino-acid chain; its full sequence is DNA-binding protein (55 aa).

The segment at 1 to 55 (MVYRRRRRSSTGTTYGSTRRRRSSGYRRRPGRPRTYRRSRSRSSTGRRSYRTRYY) is disordered. Tandem repeats lie at residues 5–10 (RRRRSS) and 19–24 (RRRRSS). The 2 X 6 AA repeats of R-R-R-R-S-S stretch occupies residues 5 to 24 (RRRRSSTGTTYGSTRRRRSS). The segment covering 18 to 41 (TRRRRSSGYRRRPGRPRTYRRSRS) has biased composition (basic residues).

As to quaternary structure, interacts with protein AC132. Phosphorylated.

It localises to the virion. Its subcellular location is the host cytoplasm. Plays a role in viral DNA packaging and nucleocapsid assembly. Promotes viral gene transcription during the late stage of infection while it is non-essential for the basal level of viral gene transcription. The chain is DNA-binding protein (P6.9) from Lepidoptera (butterflies and moths).